We begin with the raw amino-acid sequence, 362 residues long: Manganese peroxidase 3 (362 aa).

Residues 1-18 (MAFKQLLTAISIVSVANA) form the signal peptide. Positions 19-23 (ALTRR) are excised as a propeptide. 4 disulfide bridges follow: Cys-26–Cys-39, Cys-38–Cys-309, Cys-58–Cys-144, and Cys-273–Cys-338. The Mn(2+) site is built by Glu-60 and Glu-64. Residue His-71 is the Proton acceptor of the active site. Residues Asp-72, Gly-90, Asp-92, and Ser-94 each coordinate Ca(2+). N-linked (GlcNAc...) asparagine glycosylation occurs at Asn-126. His-200 contributes to the heme b binding site. Thr-201 contributes to the Ca(2+) binding site. Asp-206 contacts Mn(2+). Ca(2+) contacts are provided by Asp-218, Thr-220, Ile-223, and Asp-225. Residues 341-362 (TPFPSLSADPGPATSVAPVPPS) form a disordered region.

It belongs to the peroxidase family. Ligninase subfamily. It depends on heme b as a cofactor. Ca(2+) is required as a cofactor.

The protein resides in the secreted. The enzyme catalyses 2 Mn(2+) + H2O2 + 2 H(+) = 2 Mn(3+) + 2 H2O. Catalyzes the oxidation of Mn(2+) to Mn(3+). The latter, acting as a diffusible redox mediator, is capable of oxidizing a variety of lignin compounds. This isozyme is also able to oxidize phenols and amines in the absence of Mn(2+), similar to versatile peroxidases. This is Manganese peroxidase 3 (mnp3) from Phlebia radiata (White-rot fungus).